The following is a 447-amino-acid chain: Elongation factor 1-alpha (447 aa).

A tr-type G domain is found at 5-230 (KVHINIVVIG…DNINEPKRPS (226 aa)). Residues 14 to 21 (GHVDSGKS) form a G1 region. GTP is bound at residue 14-21 (GHVDSGKS). Lys-55 is modified (N6,N6-dimethyllysine). The G2 stretch occupies residues 70–74 (GITID). Position 79 is an N6,N6,N6-trimethyllysine (Lys-79). A G3 region spans residues 91 to 94 (DAPG). GTP is bound by residues 91–95 (DAPGH) and 153–156 (NKMD). The segment at 153-156 (NKMD) is G4. An N6,N6,N6-trimethyllysine modification is found at Lys-187. A G5 region spans residues 194-196 (SGF). Lys-261 bears the N6-methyllysine mark. 5-glutamyl glycerylphosphorylethanolamine is present on Glu-289. Lys-306 bears the N6,N6,N6-trimethyllysine mark. The residue at position 362 (Glu-362) is a 5-glutamyl glycerylphosphorylethanolamine. Lys-396 carries the post-translational modification N6,N6,N6-trimethyllysine.

Belongs to the TRAFAC class translation factor GTPase superfamily. Classic translation factor GTPase family. EF-Tu/EF-1A subfamily.

It is found in the cytoplasm. This protein promotes the GTP-dependent binding of aminoacyl-tRNA to the A-site of ribosomes during protein biosynthesis. This chain is Elongation factor 1-alpha, found in Pisum sativum (Garden pea).